The primary structure comprises 500 residues: Glycerol kinase (500 aa).

An ADP-binding site is contributed by threonine 13. ATP contacts are provided by threonine 13, threonine 14, and serine 15. Threonine 13 contributes to the sn-glycerol 3-phosphate binding site. Arginine 17 contacts ADP. Sn-glycerol 3-phosphate-binding residues include arginine 83, glutamate 84, tyrosine 135, and aspartate 244. Residues arginine 83, glutamate 84, tyrosine 135, aspartate 244, and glutamine 245 each coordinate glycerol. Residues threonine 266 and glycine 309 each coordinate ADP. Residues threonine 266, glycine 309, glutamine 313, and glycine 410 each coordinate ATP. ADP-binding residues include glycine 410 and asparagine 414.

It belongs to the FGGY kinase family.

It carries out the reaction glycerol + ATP = sn-glycerol 3-phosphate + ADP + H(+). It functions in the pathway polyol metabolism; glycerol degradation via glycerol kinase pathway; sn-glycerol 3-phosphate from glycerol: step 1/1. Its activity is regulated as follows. Inhibited by fructose 1,6-bisphosphate (FBP). In terms of biological role, key enzyme in the regulation of glycerol uptake and metabolism. Catalyzes the phosphorylation of glycerol to yield sn-glycerol 3-phosphate. In Burkholderia pseudomallei (strain K96243), this protein is Glycerol kinase.